The sequence spans 83 residues: Greglin (83 aa).

Phosphoserine is present on residues Ser-8, Ser-11, and Ser-15. 4 disulfide bridges follow: Cys-21/Cys-55, Cys-25/Cys-48, Cys-33/Cys-69, and Cys-53/Cys-76.

Its function is as follows. Serine protease inhibitor. Inhibits porcine pancreatic elastase with a Ki of 58.3 nM, human neutrophil elastase with a Ki of 3.6 nM, cathepsin G with a Ki of 153.5 nM, chymotrypsin with a Ki of 26.7 nM and subtilisin with a Ki of 0.68 nM. Does not inhibit neutrophil protease 3 or pancreatic trypsin. The protein is Greglin of Schistocerca gregaria (Desert locust).